Reading from the N-terminus, the 29-residue chain is Galanin (29 aa).

Position 29 is an alanine amide (A29).

This sequence belongs to the galanin family.

Its subcellular location is the secreted. Contracts smooth muscle of the gastrointestinal and genitourinary tract, regulates growth hormone release, modulates insulin release, and may be involved in the control of adrenal secretion. The sequence is that of Galanin (gal) from Oncorhynchus mykiss (Rainbow trout).